Reading from the N-terminus, the 209-residue chain is Iron-sulfur cluster assembly 2 homolog, mitochondrial (209 aa).

A mitochondrion-targeting transit peptide spans 1 to 27 (MIRSIFKKNSSLPYFLKRSFITKPHSI). Fe cation is bound by residues C134, C199, and C201.

The protein belongs to the HesB/IscA family. It depends on Fe cation as a cofactor.

The protein resides in the mitochondrion. Involved in the maturation of mitochondrial 4Fe-4S proteins functioning late in the iron-sulfur cluster assembly pathway. May be involved in the binding of an intermediate of Fe/S cluster assembly. In Dictyostelium discoideum (Social amoeba), this protein is Iron-sulfur cluster assembly 2 homolog, mitochondrial (isca2).